Reading from the N-terminus, the 452-residue chain is Mitochondrial import inner membrane translocase subunit TIM50 (452 aa).

The transit peptide at 1 to 23 (MSLSKLTQTCFSRHQAKTFIRLY) directs the protein to the mitochondrion. Residues 24-167 (SSDFKSLLGP…RRKRMERNTR (144 aa)) lie on the Mitochondrial matrix side of the membrane. 2 disordered regions span residues 96-115 (IEAEKVLSSPPPAPAPTSSA) and 130-153 (ESAASKSSSSSGGSSDNSDPGNAE). Residues 131 to 144 (SAASKSSSSSGGSS) are compositionally biased toward low complexity. A helical membrane pass occupies residues 168 to 188 (IGAYVLFGGSIIGFISFCFYY). Topologically, residues 189 to 452 (GRAQRDEFGN…LFGSRRHVNA (264 aa)) are mitochondrial intermembrane. The region spanning 243–387 (YLQPKYTIVI…VDLAELLKTI (145 aa)) is the FCP1 homology domain.

It belongs to the TIM50 family.

It is found in the mitochondrion inner membrane. Functionally, essential component of the TIM23 complex, a complex that mediates the translocation of transit peptide-containing proteins across the mitochondrial inner membrane. The protein is Mitochondrial import inner membrane translocase subunit TIM50 (scpl-4) of Caenorhabditis elegans.